The sequence spans 123 residues: Large ribosomal subunit protein uL29 (123 aa).

This sequence belongs to the universal ribosomal protein uL29 family. As to quaternary structure, component of the large ribosomal subunit.

It localises to the cytoplasm. In terms of biological role, component of the large ribosomal subunit. The ribosome is a large ribonucleoprotein complex responsible for the synthesis of proteins in the cell. Plays an essential role in early embryonic development. May act as a haploinsufficient tumor suppressor. This Danio rerio (Zebrafish) protein is Large ribosomal subunit protein uL29 (rpl35).